Here is a 363-residue protein sequence, read N- to C-terminus: DNA replication and repair protein RecF (363 aa).

31 to 38 (GANSSGKT) provides a ligand contact to ATP.

Belongs to the RecF family.

The protein localises to the cytoplasm. Its function is as follows. The RecF protein is involved in DNA metabolism; it is required for DNA replication and normal SOS inducibility. RecF binds preferentially to single-stranded, linear DNA. It also seems to bind ATP. The polypeptide is DNA replication and repair protein RecF (Nitrosococcus oceani (strain ATCC 19707 / BCRC 17464 / JCM 30415 / NCIMB 11848 / C-107)).